The primary structure comprises 494 residues: GTPase Der (494 aa).

EngA-type G domains are found at residues 3–166 (PVVA…VGEK) and 208–381 (IKLA…ECAT). GTP is bound by residues 9–16 (GRPNVGKS), 56–60 (DTGGI), 118–121 (NKTD), 214–221 (GRPNVGKS), 261–265 (DTAGV), and 326–329 (NKWD). In terms of domain architecture, KH-like spans 382–466 (RRVNTSMLTK…PIRIQFKEGE (85 aa)).

The protein belongs to the TRAFAC class TrmE-Era-EngA-EngB-Septin-like GTPase superfamily. EngA (Der) GTPase family. In terms of assembly, associates with the 50S ribosomal subunit.

GTPase that plays an essential role in the late steps of ribosome biogenesis. This Serratia proteamaculans (strain 568) protein is GTPase Der.